The following is a 149-amino-acid chain: Transcriptional repressor NrdR (149 aa).

Residues C3–C34 fold into a zinc finger. The region spanning P49–E139 is the ATP-cone domain.

It belongs to the NrdR family. Zn(2+) serves as cofactor.

In terms of biological role, negatively regulates transcription of bacterial ribonucleotide reductase nrd genes and operons by binding to NrdR-boxes. This chain is Transcriptional repressor NrdR, found in Shewanella sediminis (strain HAW-EB3).